The chain runs to 95 residues: Glutamyl-tRNA(Gln) amidotransferase subunit C (95 aa).

The protein belongs to the GatC family. As to quaternary structure, heterotrimer of A, B and C subunits.

It carries out the reaction L-glutamyl-tRNA(Gln) + L-glutamine + ATP + H2O = L-glutaminyl-tRNA(Gln) + L-glutamate + ADP + phosphate + H(+). The catalysed reaction is L-aspartyl-tRNA(Asn) + L-glutamine + ATP + H2O = L-asparaginyl-tRNA(Asn) + L-glutamate + ADP + phosphate + 2 H(+). In terms of biological role, allows the formation of correctly charged Asn-tRNA(Asn) or Gln-tRNA(Gln) through the transamidation of misacylated Asp-tRNA(Asn) or Glu-tRNA(Gln) in organisms which lack either or both of asparaginyl-tRNA or glutaminyl-tRNA synthetases. The reaction takes place in the presence of glutamine and ATP through an activated phospho-Asp-tRNA(Asn) or phospho-Glu-tRNA(Gln). The chain is Glutamyl-tRNA(Gln) amidotransferase subunit C from Mesorhizobium japonicum (strain LMG 29417 / CECT 9101 / MAFF 303099) (Mesorhizobium loti (strain MAFF 303099)).